Consider the following 276-residue polypeptide: Pantothenate synthetase (276 aa).

27–34 serves as a coordination point for ATP; sequence MGNLHDGH. H34 (proton donor) is an active-site residue. A (R)-pantoate-binding site is contributed by Q58. Q58 contributes to the beta-alanine binding site. Residue 145-148 participates in ATP binding; sequence GKKD. Q151 serves as a coordination point for (R)-pantoate. Residues I174 and 182 to 185 contribute to the ATP site; that span reads LSSR.

The protein belongs to the pantothenate synthetase family. Homodimer.

The protein localises to the cytoplasm. The enzyme catalyses (R)-pantoate + beta-alanine + ATP = (R)-pantothenate + AMP + diphosphate + H(+). The protein operates within cofactor biosynthesis; (R)-pantothenate biosynthesis; (R)-pantothenate from (R)-pantoate and beta-alanine: step 1/1. Functionally, catalyzes the condensation of pantoate with beta-alanine in an ATP-dependent reaction via a pantoyl-adenylate intermediate. The sequence is that of Pantothenate synthetase from Aromatoleum aromaticum (strain DSM 19018 / LMG 30748 / EbN1) (Azoarcus sp. (strain EbN1)).